The sequence spans 149 residues: D-aminoacyl-tRNA deacylase (149 aa).

Residues 137–138 (GP) carry the Gly-cisPro motif, important for rejection of L-amino acids motif.

The protein belongs to the DTD family. In terms of assembly, homodimer.

The protein localises to the cytoplasm. It catalyses the reaction glycyl-tRNA(Ala) + H2O = tRNA(Ala) + glycine + H(+). It carries out the reaction a D-aminoacyl-tRNA + H2O = a tRNA + a D-alpha-amino acid + H(+). Functionally, an aminoacyl-tRNA editing enzyme that deacylates mischarged D-aminoacyl-tRNAs. Also deacylates mischarged glycyl-tRNA(Ala), protecting cells against glycine mischarging by AlaRS. Acts via tRNA-based rather than protein-based catalysis; rejects L-amino acids rather than detecting D-amino acids in the active site. By recycling D-aminoacyl-tRNA to D-amino acids and free tRNA molecules, this enzyme counteracts the toxicity associated with the formation of D-aminoacyl-tRNA entities in vivo and helps enforce protein L-homochirality. This chain is D-aminoacyl-tRNA deacylase, found in Clostridium botulinum (strain ATCC 19397 / Type A).